The primary structure comprises 363 residues: 3-isopropylmalate dehydrogenase (363 aa).

An NAD(+)-binding site is contributed by 78–91; the sequence is GKRWDHLPINERPE. Arginine 99, arginine 109, arginine 138, and aspartate 227 together coordinate substrate. Aspartate 227, aspartate 251, and aspartate 255 together coordinate Mg(2+). An NAD(+)-binding site is contributed by 285-297; that stretch reads GSAPDIAGKNTAN.

The protein belongs to the isocitrate and isopropylmalate dehydrogenases family. LeuB type 1 subfamily. Homodimer. Requires Mg(2+) as cofactor. Mn(2+) is required as a cofactor.

It localises to the cytoplasm. It catalyses the reaction (2R,3S)-3-isopropylmalate + NAD(+) = 4-methyl-2-oxopentanoate + CO2 + NADH. It participates in amino-acid biosynthesis; L-leucine biosynthesis; L-leucine from 3-methyl-2-oxobutanoate: step 3/4. Its function is as follows. Catalyzes the oxidation of 3-carboxy-2-hydroxy-4-methylpentanoate (3-isopropylmalate) to 3-carboxy-4-methyl-2-oxopentanoate. The product decarboxylates to 4-methyl-2 oxopentanoate. In Buchnera aphidicola subsp. Uroleucon helianthicola, this protein is 3-isopropylmalate dehydrogenase.